Consider the following 216-residue polypeptide: GTPase IMAP family member GIMD1 (216 aa).

Residues 5 to 216 (KMIINLAVLG…ENHFQVLSFT (212 aa)) enclose the AIG1-type G domain. Residues 14 to 22 (GKTQSGKSS), Ser35, and 147 to 149 (HAE) contribute to the GTP site.

The protein belongs to the TRAFAC class TrmE-Era-EngA-EngB-Septin-like GTPase superfamily. AIG1/Toc34/Toc159-like paraseptin GTPase family. IAN subfamily.

The polypeptide is GTPase IMAP family member GIMD1 (Gimd1) (Rattus norvegicus (Rat)).